We begin with the raw amino-acid sequence, 690 residues long: Amino-acid acetyltransferase, mitochondrial (690 aa).

The interval 62–93 (RFPSVKKPKPPIPRQNQGAVETQSGKENEKPG) is disordered. The segment covering 75–84 (RQNQGAVETQ) has biased composition (polar residues). The N-acetyltransferase domain maps to 508–679 (DGHHLTLDDP…DYEAVCRSIQ (172 aa)).

The protein belongs to the acetyltransferase family.

It is found in the mitochondrion. The enzyme catalyses L-glutamate + acetyl-CoA = N-acetyl-L-glutamate + CoA + H(+). Its pathway is amino-acid biosynthesis; L-arginine biosynthesis; N(2)-acetyl-L-ornithine from L-glutamate: step 1/4. In terms of biological role, N-acetylglutamate synthase involved in arginine biosynthesis. This is Amino-acid acetyltransferase, mitochondrial (arg2) from Talaromyces stipitatus (strain ATCC 10500 / CBS 375.48 / QM 6759 / NRRL 1006) (Penicillium stipitatum).